Reading from the N-terminus, the 758-residue chain is DNA ligase (758 aa).

Positions 1–28 (MPENFGAMRQDGLVSTSESDSPAPAATP) are disordered. NAD(+) is bound by residues 60 to 64 (DAEFD), 109 to 110 (SL), and Glu-148. The active-site N6-AMP-lysine intermediate is the Lys-150. NAD(+) contacts are provided by Arg-171, Glu-208, Lys-324, and Lys-348. Cys-442, Cys-445, Cys-461, and Cys-467 together coordinate Zn(2+). Positions 660–749 (SVRRTLAGLT…PDHSAEAEEN (90 aa)) constitute a BRCT domain. The segment at 735 to 758 (LLAHGPDHSAEAEENESEGSTTND) is disordered.

It belongs to the NAD-dependent DNA ligase family. LigA subfamily. Mg(2+) serves as cofactor. It depends on Mn(2+) as a cofactor.

It carries out the reaction NAD(+) + (deoxyribonucleotide)n-3'-hydroxyl + 5'-phospho-(deoxyribonucleotide)m = (deoxyribonucleotide)n+m + AMP + beta-nicotinamide D-nucleotide.. Functionally, DNA ligase that catalyzes the formation of phosphodiester linkages between 5'-phosphoryl and 3'-hydroxyl groups in double-stranded DNA using NAD as a coenzyme and as the energy source for the reaction. It is essential for DNA replication and repair of damaged DNA. This chain is DNA ligase, found in Renibacterium salmoninarum (strain ATCC 33209 / DSM 20767 / JCM 11484 / NBRC 15589 / NCIMB 2235).